The primary structure comprises 162 residues: UPF0114 protein Sputw3181_3501 (162 aa).

3 helical membrane passes run 15–35, 53–73, and 136–156; these read IMAPIYLGLSLVLLGLGIKFF, LVLVTLSLIDITLVGGLIVMV, and IMWYLLIHITFVLSAFAMGYL.

This sequence belongs to the UPF0114 family.

It is found in the cell membrane. The polypeptide is UPF0114 protein Sputw3181_3501 (Shewanella sp. (strain W3-18-1)).